Consider the following 306-residue polypeptide: Ornithine carbamoyltransferase (306 aa).

Carbamoyl phosphate contacts are provided by residues 53–56 (STRT), Gln80, Arg104, and 131–134 (HPCQ). Residues Asn162, Asp220, and 224–225 (SM) each bind L-ornithine. Carbamoyl phosphate is bound by residues 260-261 (CL) and Arg288.

This sequence belongs to the aspartate/ornithine carbamoyltransferase superfamily. OTCase family.

The protein resides in the cytoplasm. It carries out the reaction carbamoyl phosphate + L-ornithine = L-citrulline + phosphate + H(+). The protein operates within amino-acid biosynthesis; L-arginine biosynthesis; L-arginine from L-ornithine and carbamoyl phosphate: step 1/3. In terms of biological role, reversibly catalyzes the transfer of the carbamoyl group from carbamoyl phosphate (CP) to the N(epsilon) atom of ornithine (ORN) to produce L-citrulline. The sequence is that of Ornithine carbamoyltransferase from Dechloromonas aromatica (strain RCB).